An 818-amino-acid polypeptide reads, in one-letter code: Lon protease (818 aa).

One can recognise a Lon N-terminal domain in the interval 14–216; that stretch reads LPVLPLRDVV…KVFALIEREI (203 aa). Position 370–377 (370–377) interacts with ATP; it reads GPPGVGKT. In terms of domain architecture, Lon proteolytic spans 605 to 786; sequence ESLVGIVTGL…DEVIKVALMH (182 aa). Active-site residues include Ser-692 and Lys-735.

Belongs to the peptidase S16 family. In terms of assembly, homohexamer. Organized in a ring with a central cavity.

The protein localises to the cytoplasm. The catalysed reaction is Hydrolysis of proteins in presence of ATP.. ATP-dependent serine protease that mediates the selective degradation of mutant and abnormal proteins as well as certain short-lived regulatory proteins. Required for cellular homeostasis and for survival from DNA damage and developmental changes induced by stress. Degrades polypeptides processively to yield small peptide fragments that are 5 to 10 amino acids long. Binds to DNA in a double-stranded, site-specific manner. This Wolbachia pipientis subsp. Culex pipiens (strain wPip) protein is Lon protease.